The following is a 173-amino-acid chain: Large ribosomal subunit protein uL14mz (173 aa).

The transit peptide at 1–61 (MAAAFASRLT…TVLKVVDNSG (61 aa)) directs the protein to the mitochondrion.

The protein belongs to the universal ribosomal protein uL14 family. In terms of assembly, part of the mitochondrial 50S ribosomal subunit. In terms of tissue distribution, mostly expressed in leaves and inflorescences, including floral organs and meristems, and, to a lower extent, in pistils.

It is found in the mitochondrion. Functionally, binds to 23S rRNA in mitochondrion. This is Large ribosomal subunit protein uL14mz (HLP) from Arabidopsis thaliana (Mouse-ear cress).